A 185-amino-acid polypeptide reads, in one-letter code: Small ribosomal subunit protein uS4 (185 aa).

The S4 RNA-binding domain maps to R108–H170.

The protein belongs to the universal ribosomal protein uS4 family. Part of the 30S ribosomal subunit. Contacts protein S5. The interaction surface between S4 and S5 is involved in control of translational fidelity.

Functionally, one of the primary rRNA binding proteins, it binds directly to 16S rRNA where it nucleates assembly of the body of the 30S subunit. Its function is as follows. With S5 and S12 plays an important role in translational accuracy. This Methanoregula boonei (strain DSM 21154 / JCM 14090 / 6A8) protein is Small ribosomal subunit protein uS4.